We begin with the raw amino-acid sequence, 749 residues long: Cytosolic phospholipase A2 (749 aa).

The C2 domain maps to 1 to 124 (MASIDPYQHI…GEKKQVPFTF (124 aa)). Positions 1-178 (MASIDPYQHI…LRKLLGPEKT (178 aa)) are phospholipid binding. Residues D40, T41, D43, N65, D93, A94, and N95 each contribute to the Ca(2+) site. The region spanning 138–740 (VCSSTDLRFS…NDVESRKLHH (603 aa)) is the PLA2c domain. The active-site Nucleophile is the S229. The disordered stretch occupies residues 428-452 (HILGNDSSDSDDEMQEPKGTENAKA). Residues 442–452 (QEPKGTENAKA) show a composition bias toward basic and acidic residues. D549 functions as the Proton acceptor in the catalytic mechanism. The tract at residues 729–749 (SLNDVESRKLHHKDSQSKFQM) is disordered. The segment covering 733–749 (VESRKLHHKDSQSKFQM) has biased composition (basic and acidic residues).

It is found in the cytoplasm. Its subcellular location is the cytoplasmic vesicle. It catalyses the reaction a 1,2-diacyl-sn-glycero-3-phosphocholine + H2O = a 1-acyl-sn-glycero-3-phosphocholine + a fatty acid + H(+). The enzyme catalyses a 1-acyl-sn-glycero-3-phosphocholine + H2O = sn-glycerol 3-phosphocholine + a fatty acid + H(+). With respect to regulation, stimulated by agonists such as ATP, EGF, thrombin and bradykinin as well as by cytosolic Ca(2+). Functionally, selectively hydrolyzes arachidonyl phospholipids in the sn-2 position releasing arachidonic acid. Together with its lysophospholipid activity, it is implicated in the initiation of the inflammatory response. In Xenopus laevis (African clawed frog), this protein is Cytosolic phospholipase A2 (pla2g4a).